The primary structure comprises 303 residues: Probable cell division protein WhiA (303 aa).

Residues 272-303 constitute a DNA-binding region (H-T-H motif); sequence SLQQIADSLDFAITKSGVNHRLRKINKLAEDL.

This sequence belongs to the WhiA family.

Its function is as follows. Involved in cell division and chromosome segregation. This chain is Probable cell division protein WhiA, found in Streptococcus equi subsp. zooepidemicus (strain MGCS10565).